The primary structure comprises 381 residues: Cytochrome b (381 aa).

4 consecutive transmembrane segments (helical) span residues 34-54, 78-99, 114-134, and 179-199; these read FGSLLGLCLIIQILTGLFLAM, WLIRNIHANGASLFFICVYLHI, WNIGVILLFLLMATAFVGYVL, and FFAFHFLLPFLILALTIIHLL. H84 and H98 together coordinate heme b. H183 and H197 together coordinate heme b. H202 is an a ubiquinone binding site. 4 helical membrane-spanning segments follow: residues 227 to 247, 289 to 309, 321 to 341, and 348 to 368; these read YKDLLGFFVMIFFLTTLALFM, LGGVLALLFSIFILMLVPLLH, LTQIFFWLLVANSIILTWIGG, and FITVGQIASVSYFSLFLIIMP.

The protein belongs to the cytochrome b family. The cytochrome bc1 complex contains 3 respiratory subunits (MT-CYB, CYC1 and UQCRFS1), 2 core proteins (UQCRC1 and UQCRC2) and probably 6 low-molecular weight proteins. It depends on heme b as a cofactor.

It is found in the mitochondrion inner membrane. In terms of biological role, component of the ubiquinol-cytochrome c reductase complex (complex III or cytochrome b-c1 complex) that is part of the mitochondrial respiratory chain. The b-c1 complex mediates electron transfer from ubiquinol to cytochrome c. Contributes to the generation of a proton gradient across the mitochondrial membrane that is then used for ATP synthesis. The sequence is that of Cytochrome b (mt-cyb) from Sphyrna tiburo tiburo (Hammerhead shark).